Here is a 702-residue protein sequence, read N- to C-terminus: MIRTFEMELGGRPFVVELGKVAELAQGSCMIKYGDTFVLVTACASKEPKEGLDFFPLSCDYEEKLYAVGKIPGGFIKRESRPSEKATLTARLIDRPIRPLFPKGYHNDVQVIATVLSVDQDCPPDISAMIGSSIALSVSNIPFMGPTASVSVGMIDGKYIVNPTSEQKELSELELIVSGTKDAVMMIEAGANELTEAQILDAIMFAHEEIKKIVTFIEHIVSEVGKPKSEVIVKETDSELLAEVVSFLDTKLANAIKTVDKTERNENIKAISAEALDYFEEKYEGRSKEVNTILSKQIKVETRKMITSEGIRPDNRKLDEIRPISSEVGILPRTHGTGLFTRGETQVLTVTTLGDLRDAQRIDGLGEEDEKRYMHHYNFPPYSVGETRFMRGPSRREIGHGALVERALKPMIPCKEDFPYAIRLVSEVLACNGSSSQASVCGSTLSLMDAGVPIKGMVAGIAMGLIKEEGQIAILSDIQGMEDALGDMDLKVAGTENGITALQMDIKIAGIDRNIMETALAQAKIGRTHILNKMKEAITSPRTELSAYAPQVTKLKVHPDKVREVIGAGGKVINKIIDETGVKINIENDGTIYIAAPDQESARVALEMIELIVKDPVVGEVYTGKVIKIMDFGAFVEILPGKEGLVHISNLAHERVAKVADVLAEGDLIEVKLMEINPQGKIGLSRKALLPKPEKEAPKKIE.

Aspartate 483 and aspartate 489 together coordinate Mg(2+). The KH domain maps to 550-609 (PQVTKLKVHPDKVREVIGAGGKVINKIIDETGVKINIENDGTIYIAAPDQESARVALEMI). Residues 619-687 (GEVYTGKVIK…PQGKIGLSRK (69 aa)) enclose the S1 motif domain.

It belongs to the polyribonucleotide nucleotidyltransferase family. The cofactor is Mg(2+).

It is found in the cytoplasm. It catalyses the reaction RNA(n+1) + phosphate = RNA(n) + a ribonucleoside 5'-diphosphate. Involved in mRNA degradation. Catalyzes the phosphorolysis of single-stranded polyribonucleotides processively in the 3'- to 5'-direction. The sequence is that of Polyribonucleotide nucleotidyltransferase 2 from Alkaliphilus metalliredigens (strain QYMF).